The following is a 598-amino-acid chain: MRLFTHGQVLALLAFVNTISAIPSFSTNSYPAHPAEPVSIFSQHQPQAPLGLWTRLRNSVIERVWGVPPQQRHRGGNKHQYPPFSAPASLRTRYGDDVVLRFKLQTADEVKALVEASNILFLDVWSSTDEWIDIRLAKDVVPSLLGLLPKSLQTTHVPLIRDLPQTIYESYPSPFQSASGHERGFLPSGEPSSDVTNIFFENYQPLSVIVPWMRLLASMFPSHAQFISIGSSFEGRDIPALRVGVRPANDQKRRRTLIIEGGSHAREWIGVSTVNYVAYSLITSYGKSKSISTLLEQFDFIFIPTINPDGYVYTWETDRLWRKNRQETSLPFCPGVDLDRTWGFEWNGNATGDNPCLESYGGDKPFAGVEAHQLAEWVKEQTEQRNTKFVAYMDLHSYSQQILYPYSYSCLSQPPNLENLEELAMGIAKAIRLTNRKTYAVSSACGGLMASQKKKAKPETFLRMESTGGSALDWFYHDFGVKYAYQLKLRDRGSYGFLLPRENIVPTGKEVFNAVMMLGRFLLGESNAFQELDWDAGFQRPNKDDKPILNDDDDDDDADTNDDGIGRKDDSWIPDEYKGDNDRDESDGGWAFRRLRKR.

An N-terminal signal peptide occupies residues 1–21; the sequence is MRLFTHGQVLALLAFVNTISA. A propeptide spanning residues 22–174 is cleaved from the precursor; the sequence is IPSFSTNSYP…QTIYESYPSP (153 aa). One can recognise a Peptidase M14 domain in the interval 202–522; that stretch reads NYQPLSVIVP…NAVMMLGRFL (321 aa). Zn(2+) contacts are provided by histidine 264 and glutamate 267. Residues 264–267, arginine 322, and 339–340 contribute to the substrate site; these read HARE and DR. Cysteine 333 and cysteine 356 are disulfide-bonded. Asparagine 349 carries an N-linked (GlcNAc...) asparagine glycan. Zn(2+) is bound at residue histidine 396. 397–398 contributes to the substrate binding site; it reads SY. Positions 539–598 are disordered; it reads QRPNKDDKPILNDDDDDDDADTNDDGIGRKDDSWIPDEYKGDNDRDESDGGWAFRRLRKR. A compositionally biased stretch (acidic residues) spans 550–562; the sequence is NDDDDDDDADTND. The segment covering 564-581 has biased composition (basic and acidic residues); sequence GIGRKDDSWIPDEYKGDN.

This sequence belongs to the peptidase M14 family. It depends on Zn(2+) as a cofactor.

Its subcellular location is the vacuole. It localises to the secreted. In terms of biological role, inactive carboxypeptidase that may play a role in cell wall organization and biogenesis. This is Inactive metallocarboxypeptidase ECM14 (ECM14) from Ajellomyces capsulatus (strain H143) (Darling's disease fungus).